Consider the following 114-residue polypeptide: Large ribosomal subunit protein bL20 (114 aa).

Belongs to the bacterial ribosomal protein bL20 family.

Its function is as follows. Binds directly to 23S ribosomal RNA and is necessary for the in vitro assembly process of the 50S ribosomal subunit. It is not involved in the protein synthesizing functions of that subunit. The polypeptide is Large ribosomal subunit protein bL20 (Anaeromyxobacter sp. (strain Fw109-5)).